We begin with the raw amino-acid sequence, 300 residues long: Jacalin-related lectin 33 (300 aa).

The segment at 1–20 (MAQKVEAGGGAGGASWDDGV) is disordered. The residue at position 2 (Ala-2) is an N-acetylalanine. 2 consecutive Jacalin-type lectin domains span residues 2 to 146 (AQKV…YFAT) and 154 to 297 (AKKL…HVMP).

Belongs to the jacalin lectin family. In terms of assembly, component of the PYK10 complex, at least composed of PYK10/BGLU23, BGLU21, BGLU22, JAL22, JAL23, PBP1/JAL30, PBP2/JAL31, JAL32, JAL33, JAL34, JAL35, GLL22 and GLL23.

Sugar-binding protein showing significant affinity for (Glc alpha(1-4)Glc)(3) maltohexaose, (Glc alpha(1-6)Glc)(3) isomaltohexaose, Gal alpha(1-4)Gal beta(1-4)Glc, GalNAc alpha(1-3)(Fuc alpha(1-2)) and Gal beta(1-3)(Fuc alpha(1-4))GlcNAc beta(1-3)Gal beta(1-4)Glc. This is Jacalin-related lectin 33 (JAL33) from Arabidopsis thaliana (Mouse-ear cress).